The following is a 187-amino-acid chain: Pre-mRNA-splicing factor cwf7 (187 aa).

This sequence belongs to the SPF27 family. In terms of assembly, belongs to the 40S cdc5-associated complex (or cwf complex), a spliceosome sub-complex reminiscent of a late-stage spliceosome composed of the U2, U5 and U6 snRNAs and at least brr2, cdc5, cwf2/prp3, cwf3/syf1, cwf4/syf3, cwf5/ecm2, spp42/cwf6, cwf7/spf27, cwf8, cwf9, cwf10, cwf11, cwf12, prp45/cwf13, cwf14, cwf15, cwf16, cwf17, cwf18, cwf19, cwf20, cwf21, cwf22, cwf23, cwf24, cwf25, cwf26, cyp7/cwf27, cwf28, cwf29/ist3, lea1, msl1, prp5/cwf1, prp10, prp12/sap130, prp17, prp22, sap61, sap62, sap114, sap145, slu7, smb1, smd1, smd3, smf1, smg1 and syf2.

It localises to the nucleus. In terms of biological role, involved in mRNA splicing. The chain is Pre-mRNA-splicing factor cwf7 (cwf7) from Schizosaccharomyces pombe (strain 972 / ATCC 24843) (Fission yeast).